Reading from the N-terminus, the 293-residue chain is Ribonuclease HIII (293 aa).

The RNase H type-2 domain maps to 78–293; it reads LPLIGTDEVG…TEKAKKRLER (216 aa). 3 residues coordinate a divalent metal cation: Asp84, Glu85, and Asp187.

Belongs to the RNase HII family. RnhC subfamily. The cofactor is Mn(2+). Requires Mg(2+) as cofactor.

It is found in the cytoplasm. The catalysed reaction is Endonucleolytic cleavage to 5'-phosphomonoester.. In terms of biological role, endonuclease that specifically degrades the RNA of RNA-DNA hybrids. This chain is Ribonuclease HIII, found in Streptococcus pneumoniae (strain Taiwan19F-14).